The chain runs to 321 residues: Lipoyl synthase (321 aa).

Residues cysteine 68, cysteine 73, cysteine 79, cysteine 94, cysteine 98, cysteine 101, and serine 308 each coordinate [4Fe-4S] cluster. In terms of domain architecture, Radical SAM core spans 80-297; it reads FNHGTATFMI…KEIALELGFT (218 aa).

This sequence belongs to the radical SAM superfamily. Lipoyl synthase family. Requires [4Fe-4S] cluster as cofactor.

It is found in the cytoplasm. It carries out the reaction [[Fe-S] cluster scaffold protein carrying a second [4Fe-4S](2+) cluster] + N(6)-octanoyl-L-lysyl-[protein] + 2 oxidized [2Fe-2S]-[ferredoxin] + 2 S-adenosyl-L-methionine + 4 H(+) = [[Fe-S] cluster scaffold protein] + N(6)-[(R)-dihydrolipoyl]-L-lysyl-[protein] + 4 Fe(3+) + 2 hydrogen sulfide + 2 5'-deoxyadenosine + 2 L-methionine + 2 reduced [2Fe-2S]-[ferredoxin]. It functions in the pathway protein modification; protein lipoylation via endogenous pathway; protein N(6)-(lipoyl)lysine from octanoyl-[acyl-carrier-protein]: step 2/2. In terms of biological role, catalyzes the radical-mediated insertion of two sulfur atoms into the C-6 and C-8 positions of the octanoyl moiety bound to the lipoyl domains of lipoate-dependent enzymes, thereby converting the octanoylated domains into lipoylated derivatives. The chain is Lipoyl synthase from Vibrio vulnificus (strain CMCP6).